Here is a 340-residue protein sequence, read N- to C-terminus: Glycerol-3-phosphate dehydrogenase [NAD(P)+] (340 aa).

Positions 11, 12, 33, and 106 each coordinate NADPH. The sn-glycerol 3-phosphate site is built by Lys106, Gly137, and Ser139. An NADPH-binding site is contributed by Ala141. Residues Lys192, Asp245, Ser255, Arg256, and Asn257 each contribute to the sn-glycerol 3-phosphate site. Residue Lys192 is the Proton acceptor of the active site. Arg256 provides a ligand contact to NADPH. NADPH-binding residues include Val280 and Glu282.

The protein belongs to the NAD-dependent glycerol-3-phosphate dehydrogenase family.

The protein localises to the cytoplasm. It carries out the reaction sn-glycerol 3-phosphate + NAD(+) = dihydroxyacetone phosphate + NADH + H(+). It catalyses the reaction sn-glycerol 3-phosphate + NADP(+) = dihydroxyacetone phosphate + NADPH + H(+). It participates in membrane lipid metabolism; glycerophospholipid metabolism. Catalyzes the reduction of the glycolytic intermediate dihydroxyacetone phosphate (DHAP) to sn-glycerol 3-phosphate (G3P), the key precursor for phospholipid synthesis. This Bacillus mycoides (strain KBAB4) (Bacillus weihenstephanensis) protein is Glycerol-3-phosphate dehydrogenase [NAD(P)+].